We begin with the raw amino-acid sequence, 309 residues long: UDP-N-acetylenolpyruvoylglucosamine reductase (309 aa).

Positions 34–198 (RVGGPAEVMF…VRARLHARPG (165 aa)) constitute an FAD-binding PCMH-type domain. Arg-178 is a catalytic residue. Ser-227 functions as the Proton donor in the catalytic mechanism. Glu-297 is a catalytic residue.

Belongs to the MurB family. FAD is required as a cofactor.

It is found in the cytoplasm. It catalyses the reaction UDP-N-acetyl-alpha-D-muramate + NADP(+) = UDP-N-acetyl-3-O-(1-carboxyvinyl)-alpha-D-glucosamine + NADPH + H(+). It functions in the pathway cell wall biogenesis; peptidoglycan biosynthesis. Its function is as follows. Cell wall formation. The protein is UDP-N-acetylenolpyruvoylglucosamine reductase of Acidiphilium cryptum (strain JF-5).